A 413-amino-acid chain; its full sequence is Probable tRNA pseudouridine synthase D (413 aa).

Residue D97 is the Nucleophile of the active site. The region spanning 167-370 (AVPNYYGYQR…YGSYRRARLE (204 aa)) is the TRUD domain.

This sequence belongs to the pseudouridine synthase TruD family.

It catalyses the reaction uridine(13) in tRNA = pseudouridine(13) in tRNA. In terms of biological role, could be responsible for synthesis of pseudouridine from uracil-13 in transfer RNAs. In Pyrobaculum arsenaticum (strain DSM 13514 / JCM 11321 / PZ6), this protein is Probable tRNA pseudouridine synthase D.